We begin with the raw amino-acid sequence, 538 residues long: [Pyruvate dehydrogenase [acetyl-transferring]]-phosphatase 1, mitochondrial (538 aa).

The N-terminal 71 residues, 1-71, are a transit peptide targeting the mitochondrion; it reads MPAPTQLFFP…WWQYTQGRRY (71 aa). The region spanning 109-525 is the PPM-type phosphatase domain; that stretch reads ILGFDSNQLP…DDITIIVVQF (417 aa). Residues Asp144 and Gly145 each contribute to the Mn(2+) site. Lys202 is subject to N6-acetyllysine. Mn(2+) contacts are provided by Asp418 and Asp516.

It belongs to the PP2C family. In terms of assembly, heterodimer of a catalytic (PDP1) and a regulatory (PDPR) subunit. Requires Mn(2+) as cofactor. It depends on Mg(2+) as a cofactor.

The protein localises to the mitochondrion. It catalyses the reaction O-phospho-L-seryl-[pyruvate dehydrogenase E1 alpha subunit] + H2O = L-seryl-[pyruvate dehydrogenase E1 alpha subunit] + phosphate. Magnesium-dependent and calcium-stimulated. PDP1 activity strongly depends on its Ca(2+)-dependent binding to the lipoyl domain of E2 subunit of component of the pyruvate dehydrogenase complex. Functionally, mitochondrial enzyme that catalyzes the dephosphorylation and concomitant reactivation of the alpha subunit of the E1 component of the pyruvate dehydrogenase complex (PDC), thereby stimulating the conversion of pyruvate into acetyl-CoA. The sequence is that of [Pyruvate dehydrogenase [acetyl-transferring]]-phosphatase 1, mitochondrial (Pdp1) from Mus musculus (Mouse).